Consider the following 480-residue polypeptide: Chromosomal replication initiator protein DnaA (480 aa).

The segment at 1-71 is domain I, interacts with DnaA modulators; it reads MRHDALFERV…TTLVQQEDSE (71 aa). Residues 71 to 137 are domain II; that stretch reads EILKVEILVR…RPVQAPLFGS (67 aa). Positions 138-360 are domain III, AAA+ region; it reads PLDQRYGFDS…GAFNQLLFRR (223 aa). Gly-184, Gly-186, Lys-187, and Thr-188 together coordinate ATP. The interval 361–480 is domain IV, binds dsDNA; that stretch reads SFEPQLSIER…IELLKRLINE (120 aa).

The protein belongs to the DnaA family. In terms of assembly, oligomerizes as a right-handed, spiral filament on DNA at oriC.

The protein resides in the cytoplasm. Its function is as follows. Plays an essential role in the initiation and regulation of chromosomal replication. ATP-DnaA binds to the origin of replication (oriC) to initiate formation of the DNA replication initiation complex once per cell cycle. Binds the DnaA box (a 9 base pair repeat at the origin) and separates the double-stranded (ds)DNA. Forms a right-handed helical filament on oriC DNA; dsDNA binds to the exterior of the filament while single-stranded (ss)DNA is stabiized in the filament's interior. The ATP-DnaA-oriC complex binds and stabilizes one strand of the AT-rich DNA unwinding element (DUE), permitting loading of DNA polymerase. After initiation quickly degrades to an ADP-DnaA complex that is not apt for DNA replication. Binds acidic phospholipids. In Rhizobium meliloti (strain 1021) (Ensifer meliloti), this protein is Chromosomal replication initiator protein DnaA.